The following is a 306-amino-acid chain: Palmitoyl-protein thioesterase 1 (306 aa).

The N-terminal stretch at 1–27 (MASSSCLWLLALAFLLGSCASLALGHL) is a signal peptide. Cystine bridges form between Cys-45-Cys-46, Cys-96-Cys-128, and Cys-152-Cys-160. The active site involves Ser-115. 3 N-linked (GlcNAc...) asparagine glycosylation sites follow: Asn-197, Asn-212, and Asn-232. Active-site residues include Asp-233 and His-289.

It belongs to the palmitoyl-protein thioesterase family. In terms of assembly, interacts with CLN5, ATP5F1A and ATP5F1B. In terms of processing, glycosylated. In terms of tissue distribution, spleen, brain, seminal vesicle, and testis. Lower levels of activity in liver, heart, lung, and skeletal muscle.

It localises to the lysosome. It is found in the secreted. Its subcellular location is the golgi apparatus. The protein localises to the endoplasmic reticulum. The catalysed reaction is S-hexadecanoyl-L-cysteinyl-[protein] + H2O = L-cysteinyl-[protein] + hexadecanoate + H(+). The enzyme catalyses hexadecanoyl-CoA + H2O = hexadecanoate + CoA + H(+). It carries out the reaction S-hexadecanoyl-N-acetylcysteamine + H2O = N-acetylcysteamine + hexadecanoate + H(+). It catalyses the reaction S-hexadecanoyl-N-acetylcysteine methyl ester + H2O = N-acetylcysteine methyl ester + hexadecanoate + H(+). With respect to regulation, palmitoylation reduces PPT1 enzymatic activity. Has thioesterase activity against fatty acid thioesters with 14 -18 carbons, including palmitoyl-CoA, S-palmitoyl-N-acetylcysteamine, and palmitoylated proteins. In contrast to PPT2, PPT1 can hydrolyze palmitoylated proteins and palmitoylcysteine. The chain is Palmitoyl-protein thioesterase 1 (PPT1) from Bos taurus (Bovine).